The chain runs to 211 residues: uncharacterized protein (211 aa).

The next 6 helical transmembrane spans lie at 21 to 38 (WYVI…ASEI), 53 to 75 (WGMD…YAAV), 82 to 104 (TAYL…MGVA), 124 to 146 (IFYA…AANV), 159 to 178 (PLLI…YWVY), and 188 to 210 (AVSF…LMEW).

Its subcellular location is the cell membrane. This is an uncharacterized protein from Archaeoglobus fulgidus (strain ATCC 49558 / DSM 4304 / JCM 9628 / NBRC 100126 / VC-16).